We begin with the raw amino-acid sequence, 222 residues long: Cell division protein FtsQ (222 aa).

Residues methionine 1–valine 5 are Cytoplasmic-facing. The helical transmembrane segment at isoleucine 6–phenylalanine 26 threads the bilayer. Residues valine 27–arginine 222 lie on the Extracellular side of the membrane. The POTRA domain maps to leucine 30–arginine 98.

Belongs to the FtsQ/DivIB family. FtsQ subfamily.

The protein resides in the cell membrane. Functionally, essential cell division protein. This chain is Cell division protein FtsQ, found in Corynebacterium glutamicum (strain ATCC 13032 / DSM 20300 / JCM 1318 / BCRC 11384 / CCUG 27702 / LMG 3730 / NBRC 12168 / NCIMB 10025 / NRRL B-2784 / 534).